We begin with the raw amino-acid sequence, 518 residues long: Probable portal protein (518 aa).

The tract at residues 492–518 (KALQANGVTHVEPDEEDDDEPNATGTD) is disordered.

Belongs to the siphoviridae portal protein family. In terms of assembly, homododecamer. Interacts with the terminase complex composed of two small and one large terminase subunits.

The protein localises to the virion. Functionally, forms the portal vertex of the capsid. This portal plays critical roles in head assembly, genome packaging, neck/tail attachment, and genome ejection. The portal protein multimerizes as a single ring-shaped homododecamer arranged around a central channel. Binds to the terminase subunits to form the packaging machine. This Vreelandella aquamarina (Bacteriophage phiHAP-1) protein is Probable portal protein.